A 284-amino-acid chain; its full sequence is Bifunctional protein FolD (284 aa).

Residues 164-166 (GRG), Ser-189, and Ile-230 each bind NADP(+).

This sequence belongs to the tetrahydrofolate dehydrogenase/cyclohydrolase family. As to quaternary structure, homodimer.

It carries out the reaction (6R)-5,10-methylene-5,6,7,8-tetrahydrofolate + NADP(+) = (6R)-5,10-methenyltetrahydrofolate + NADPH. The enzyme catalyses (6R)-5,10-methenyltetrahydrofolate + H2O = (6R)-10-formyltetrahydrofolate + H(+). It participates in one-carbon metabolism; tetrahydrofolate interconversion. In terms of biological role, catalyzes the oxidation of 5,10-methylenetetrahydrofolate to 5,10-methenyltetrahydrofolate and then the hydrolysis of 5,10-methenyltetrahydrofolate to 10-formyltetrahydrofolate. The protein is Bifunctional protein FolD of Desulforamulus reducens (strain ATCC BAA-1160 / DSM 100696 / MI-1) (Desulfotomaculum reducens).